The sequence spans 317 residues: Glutamyl-tRNA reductase-binding protein, chloroplastic (317 aa).

The N-terminal 42 residues, 1-42 (MQLQTQSFALNLLPSPNFAKPIERREFISLKRDPSRPISLRC), are a transit peptide targeting the chloroplast.

Interacts with HEMA1 and forms a heterotetramer of two GLUTRBP and two HEMA1 subunits.

The protein resides in the plastid. It localises to the chloroplast stroma. Its function is as follows. Involved in the regulation of glutamyl-tRNA reductase (GluTR) which is important for the synthesis and distribution of 5-aminolevulinate, a precursor in heme and chlorophyll biosynthesis. Stimulates GluTR activity and regulates glutamate-1-semialdehyde release. May play a role in heme metabolism. Necessary for efficient photosynthetic electron transport in chloroplasts. The sequence is that of Glutamyl-tRNA reductase-binding protein, chloroplastic from Arabidopsis thaliana (Mouse-ear cress).